The chain runs to 117 residues: Appetite-regulating hormone (117 aa).

Positions Met-1–Ala-23 are cleaved as a signal peptide. A lipid anchor (O-decanoyl serine; alternate) is attached at Ser-26. Ser-26 carries the O-hexanoyl serine; alternate lipid modification. A lipid anchor (O-octanoyl serine; alternate) is attached at Ser-26. The segment at Ser-29–Gly-67 is disordered. Positions Glu-31–Lys-43 are enriched in basic and acidic residues. The propeptide at Ala-52–Gln-75 is removed in mature form. The residue at position 98 (Leu-98) is a Leucine amide. The propeptide at Gly-99–Lys-117 is removed in mature form.

This sequence belongs to the motilin family. Post-translationally, O-octanoylated by GOAT/MBOAT4. O-octanoylation is essential for ghrelin activity. In terms of processing, amidation of Leu-98 is essential for obestatin activity.

It localises to the secreted. In terms of biological role, ghrelin is the ligand for growth hormone secretagogue receptor type 1 (GHSR). Induces the release of growth hormone from the pituitary. Has an appetite-stimulating effect, induces adiposity and stimulates gastric acid secretion. Involved in growth regulation. Obestatin may be the ligand for GPR39. May have an appetite-reducing effect resulting in decreased food intake. May reduce gastric emptying activity and jejunal motility. The polypeptide is Appetite-regulating hormone (GHRL) (Papio hamadryas (Hamadryas baboon)).